A 337-amino-acid polypeptide reads, in one-letter code: Inositol 2-dehydrogenase (337 aa).

Belongs to the Gfo/Idh/MocA family. In terms of assembly, homotetramer.

The enzyme catalyses myo-inositol + NAD(+) = scyllo-inosose + NADH + H(+). Functionally, involved in the oxidation of myo-inositol (MI) to 2-keto-myo-inositol (2KMI or 2-inosose). This is Inositol 2-dehydrogenase from Ralstonia nicotianae (strain ATCC BAA-1114 / GMI1000) (Ralstonia solanacearum).